A 307-amino-acid chain; its full sequence is MAKQKFKITNWSTYNKALINRGSLTFWLDDGAIQAWYESATPSSRGRPQRYSDLAITTVLVIKRVFRLTLRAAQGFIDSIFTLMNVPLRCPDYSCVSRRAKSVNISFKTFTRGEIAHLVIDSTGLKVFGEGEWKVKKHGQERRRIWRKLHLAVDSKTHEIICADLSLNNVTDSEAFPGLIRQTHRKIRAASADGAYDTRLCHDELRRKKISALIPPRKGAGYWPGEYADRNRAVANQRMTGSNARWKWTTDYNRRSIAETAMYRVKQLFGGSLTLRDYDGQVAEAMALVRALNKMTKAGMPESVRIA.

Functionally, required for transposition of transposon Tn903. The protein is Probable transposase for transposon Tn903 of Escherichia coli.